The primary structure comprises 470 residues: Argininosuccinate lyase (470 aa).

This sequence belongs to the lyase 1 family. Argininosuccinate lyase subfamily.

The protein localises to the cytoplasm. It catalyses the reaction 2-(N(omega)-L-arginino)succinate = fumarate + L-arginine. The protein operates within amino-acid biosynthesis; L-arginine biosynthesis; L-arginine from L-ornithine and carbamoyl phosphate: step 3/3. This Ehrlichia chaffeensis (strain ATCC CRL-10679 / Arkansas) protein is Argininosuccinate lyase.